The following is a 612-amino-acid chain: Cryptochrome-2 (612 aa).

The tract at residues 1–485 (MKMDKKTIVW…TARELLAKAI (485 aa)) is CNT2, binds chromophores to sense blue light and mediate CRY dimerization. The Photolyase/cryptochrome alpha/beta domain occupies 5–134 (KKTIVWFRRD…SVQSYNGDLL (130 aa)). Y232 contributes to the FAD binding site. Mg(2+)-binding residues include N235 and S243. 244 to 248 (TSLLS) contacts FAD. Mg(2+) is bound at residue H355. Residues N356 and 387-389 (DAD) each bind FAD. 356–357 (NR) contributes to the ATP binding site. D406 lines the ATP pocket. Residues 486 to 612 (SRTREAQIMI…TTSLGKNGCK (127 aa)) are CCT2/CCE2, mediates blue light signaling. The interval 539–576 (GSKRVKPEEEEERDMKKSRGFDERELFSTAESSSSSSV) is disordered. Residues 541 to 555 (KRVKPEEEEERDMKK) carry the Nuclear localization signal motif. A compositionally biased stretch (basic and acidic residues) spans 551–564 (RDMKKSRGFDEREL). Position 587 is a phosphoserine; by CK1 (S587). The tract at residues 590-612 (KNLEGIQDSSDQITTSLGKNGCK) is disordered. A compositionally biased stretch (polar residues) spans 596–612 (QDSSDQITTSLGKNGCK). 2 positions are modified to phosphoserine: S598 and S599. T603 carries the post-translational modification Phosphothreonine; by CK1. At S605 the chain carries Phosphoserine.

It belongs to the DNA photolyase class-1 family. As to quaternary structure, homodimer. Blue-light dependent dimerization. Interacts with COP1 and PHYB in the nucleus. Binds reversibly to CIBs proteins such as BHLH63/CIB1, BHLH78/CIB2, BHLH74/CIB4 and BHLH76/CIB5 after blue light illumination to stimulate their transcription factor activities. Interacts with PIF4 and PIF5 in the nucleus in response to low blue light (LBL). Binds to SPA1 in response to blue light, this interaction prevents SPA1/COP1 complex formation but stimulates interaction with COP1, and thus avoid COP1-dependent degradation of the transcription factors CO and HY5 by the proteasome and promotes hypocotyl elongation and floral initiation. Binding to ATP mediates conformational changes which facilitate flavin binding. Interacts with BIC1 in both darkness and light. Interacts with NRP. FAD is required as a cofactor. It depends on (6R)-5,10-methylene-5,6,7,8-tetrahydrofolate as a cofactor. Post-translationally, phosphorylated by CK1.3 and CK1.4; in response to blue light. Required for degradation. Adopts an open conformation when phosphorylated upon photoexcitation and thus interacts with signaling partner proteins. Not autophosphorylated, even in complex with FAD cofactor. Ubiquitinated; in response to blue light. Mostly expressed in the shoot meristems and root tips, and, to a lower extent, in the cotyledons, hypocotyls, and roots.

The protein localises to the nucleus. It localises to the PML body. The protein resides in the cytoplasm. Functionally, photoreceptor that mediates primarily blue light inhibition of hypocotyl elongation and photoperiodic control of floral initiation, and regulates other light responses, including circadian rhythms, tropic growth, stomata opening, guard cell development, root development, bacterial and viral pathogen responses, abiotic stress responses, cell cycles, programmed cell death, apical dominance, fruit and ovule development, seed dormancy, and magnetoreception. Photoexcited cryptochromes interact with signaling partner proteins to alter gene expression at both transcriptional and post-translational levels and, consequently, regulate the corresponding metabolic and developmental programs. Blue-light absorbing flavoprotein that activates reversible flavin photoreduction via an electron transport chain comprising a tryptophan triad (W-321, W-374 and W-397), or via an alternative electron transport that involves small metabolites, including NADPH, NADH, and ATP. The half-life of the activated signaling state is about 16 minutes. Perceives low blue light (LBL) and responds by directly contacting two bHLH transcription factors, PIF4 and PIF5, at chromatin on E-box variant 5'-CA[CT]GTG-3' to promote their activity and stimulate specific gene expression to adapt global physiology (e.g. hypocotyl elongation and hyponastic growth in low blue light). In response to blue light, binds to CIB proteins (e.g. BHLH63/CIB1 and BHLH76/CIB5) to activate transcription and floral initiation. Mediates blue light-induced gene expression, floral initiation and hypocotyl elongation through the interaction with SPA1 that prevents formation of SPA1/COP1 complex but stimulates COP1 binding, and thus inhibits COP1-mediated degradation of transcription factors (e.g. CO and HY5). Promotes flowering time in continuous light (LL). Involved in shortening the circadian clock period, especially at 27 degrees Celsius, in blue light (BL). Required to maintain clock genes expression rhythm. Triggers nuclear accumulation of ROS in response to blue light illumination. Involved in blue light-dependent stomatal opening, transpiration and inhibition of stem and root growth, probably by regulating abscisic acid (ABA). Regulates the timing of flowering by promoting the expression of 'FLOWERING LOCUS T' (FT) in vascular bundles. Negatively regulated by 'FLOWERING LOCUS C' (FLC). General positive regulator of reversible low light-induced chromatin decompaction. Involved in triggering chromatin decondensation during floral transition. Together with phototropins, involved in phototropism regulation by various blue light fluence; blue light attenuates phototropism in high fluence rates (100 umol.m-2.s-1) but enhances phototropism in low fluence rates (&lt;1.0 umol.m-2.s-1). The effect of near-null magnetic field on flowering is altered by changes of blue light cycle and intensity in a CRY1/CRY2-dependent manner. Involved in the strigolactone signaling that regulates hypocotyl growth in response to blue light. Its function is as follows. Confers resistance to turnip crinkle virus (TCV) by preventing COP1-mediated proteasome-mediated degradation of RPP8/HRT, thus promoting its stability in light. Exposure to darkness or blue-light induces degradation of CRY2, and in turn of RPP8/HRT, resulting in susceptibility to TCV. The sequence is that of Cryptochrome-2 from Arabidopsis thaliana (Mouse-ear cress).